The chain runs to 254 residues: Ribonuclease HII (254 aa).

The 188-residue stretch at 67–254 (IVIAGVDEVG…HRMSFLKNII (188 aa)) folds into the RNase H type-2 domain. Residues aspartate 73, glutamate 74, and aspartate 170 each contribute to the a divalent metal cation site.

Belongs to the RNase HII family. Mn(2+) is required as a cofactor. Mg(2+) serves as cofactor.

The protein localises to the cytoplasm. It catalyses the reaction Endonucleolytic cleavage to 5'-phosphomonoester.. In terms of biological role, endonuclease that specifically degrades the RNA of RNA-DNA hybrids. This Clostridium acetobutylicum (strain ATCC 824 / DSM 792 / JCM 1419 / IAM 19013 / LMG 5710 / NBRC 13948 / NRRL B-527 / VKM B-1787 / 2291 / W) protein is Ribonuclease HII.